The sequence spans 225 residues: Membrane protein (225 aa).

Residues 1-20 are Virion surface-facing; sequence MSNETNCTLDFEQSVELFKE. A helical membrane pass occupies residues 21-41; sequence YNLFITAFLLFLTIILQYGYA. The Intravirion segment spans residues 42 to 51; it reads TRSKFIYILK. Residues 52 to 72 traverse the membrane as a helical segment; the sequence is MIVLWCFWPLNIAVGVISCIY. Over 73 to 77 the chain is Virion surface; the sequence is PPNTG. Residues 78 to 98 form a helical membrane-spanning segment; the sequence is GLVAAIILTVFACLSFVGYWI. Over 99–225 the chain is Intravirion; sequence QSIRLFKRCR…VATGGSSLYT (127 aa).

Belongs to the gammacoronaviruses M protein family. As to quaternary structure, homomultimer. Interacts with envelope E protein in the budding compartment of the host cell, which is located between endoplasmic reticulum and the Golgi complex. Forms a complex with HE and S proteins. Interacts with nucleocapsid N protein. This interaction probably participates in RNA packaging into the virus.

The protein localises to the virion membrane. The protein resides in the host Golgi apparatus membrane. In terms of biological role, component of the viral envelope that plays a central role in virus morphogenesis and assembly via its interactions with other viral proteins. This is Membrane protein from Gallus gallus (Chicken).